We begin with the raw amino-acid sequence, 53 residues long: Photoreceptor disk component PRCD (53 aa).

Cysteine 2 carries S-palmitoyl cysteine lipidation. Positions 24 to 53 (PEPSRVDGTVVGSGSDTDLQSTGREKGPVK) are disordered. Residues 35–45 (GSGSDTDLQST) are compositionally biased toward polar residues.

It belongs to the PRCD family. In terms of assembly, interacts with RHO/rhodopsin; the interaction promotes PRCD stability. Palmitoylated at Cys-2. Palmitoylation is essential for protein stability and trafficking to the photoreceptor outer segment, but does not appear to be essential for membrane localization. Probably palmitoylated by ZDHHC3. In terms of processing, phosphorylated. In terms of tissue distribution, expressed in retina, where it localizes to both rod and cone photoreceptors (at protein level).

Its subcellular location is the cell projection. The protein localises to the cilium. It is found in the photoreceptor outer segment. The protein resides in the membrane. It localises to the endoplasmic reticulum. Its subcellular location is the golgi apparatus. Its function is as follows. Involved in vision. This is Photoreceptor disk component PRCD from Mus musculus (Mouse).